Consider the following 377-residue polypeptide: Guanine nucleotide-binding protein subunit alpha-13 (377 aa).

S-palmitoyl cysteine attachment occurs at residues C14 and C18. Residues 47–377 enclose the G-alpha domain; sequence RLVKILLLGA…HDNLKQLMLQ (331 aa). The G1 motif stretch occupies residues 50 to 63; the sequence is KILLLGAGESGKST. GTP contacts are provided by residues 58–63, S173, and 197–200; these read ESGKST and LLAR. S62 provides a ligand contact to Mg(2+). The tract at residues 195 to 203 is G2 motif; the sequence is DILLARRPT. T203 serves as a coordination point for Mg(2+). T203 is modified (phosphothreonine; by PKA). The G3 motif stretch occupies residues 218 to 227; it reads FKMVDVGGQR. The tract at residues 287–294 is G4 motif; that stretch reads ILFLNKTD. Residues 291–294 and A349 contribute to the GTP site; that span reads NKTD. The G5 motif stretch occupies residues 347 to 352; sequence TTAINT.

The protein belongs to the G-alpha family. G(12) subfamily. In terms of assembly, g proteins are composed of 3 units; alpha, beta and gamma. The alpha chain contains the guanine nucleotide binding site. Interacts with UBXD5. Interacts with HAX1. Interacts (in GTP-bound form) with PPP5C (via TPR repeats); activates PPP5C phosphatase activity and translocates PPP5C to the cell membrane. Interacts with RGS22. Interacts (in GTP-bound form) with ARHGEF1. Interacts (in GTP-bound form) with ARHGEF11 (via RGS domain). Interacts (in GTP-bound form) with ARHGEF12 (via RGS domain). Interacts with CTNND1. Interacts with GASL2L2. Interacts with GPR35. Interacts with GPR174. Post-translationally, palmitoylation is critical for proper membrane localization and signaling. Phosphorylation on Thr-203 by PKA destabilizes the heterotrimer of alpha, beta and gamma, and inhibits Rho activation. Expressed in testis, including in Leydig cells and in the seminiferous epithelium, in differentiating cells from the spermatogonia to mature spermatozoa stages and round spermatids (at protein level). Expressed in 99.2% of spermatozoa from healthy individuals, but only in 28.6% of macrocephalic spermatozoa from infertile patients (at protein level).

The protein localises to the cell membrane. It localises to the melanosome. Its subcellular location is the cytoplasm. It is found in the nucleus. Guanine nucleotide-binding proteins (G proteins) are involved as modulators or transducers in various transmembrane signaling systems. Activates effector molecule RhoA by binding and activating RhoGEFs (ARHGEF1/p115RhoGEF, ARHGEF11/PDZ-RhoGEF and ARHGEF12/LARG). GNA13-dependent Rho signaling subsequently regulates transcription factor AP-1 (activating protein-1). Promotes tumor cell invasion and metastasis by activating RhoA/ROCK signaling pathway. Inhibits CDH1-mediated cell adhesion in a process independent from Rho activation. In lymphoid follicles, transmits P2RY8- and S1PR2-dependent signals that lead to inhibition of germinal center (GC) B cell growth and migration outside the GC niche. The protein is Guanine nucleotide-binding protein subunit alpha-13 (GNA13) of Homo sapiens (Human).